The chain runs to 119 residues: NADH-quinone oxidoreductase subunit A (119 aa).

3 helical membrane-spanning segments follow: residues 9 to 29, 63 to 83, and 88 to 108; these read VLLF…LGYV, LVAI…PWAV, and VGMA…VGFA.

Belongs to the complex I subunit 3 family. In terms of assembly, NDH-1 is composed of 14 different subunits. Subunits NuoA, H, J, K, L, M, N constitute the membrane sector of the complex.

The protein resides in the cell inner membrane. The enzyme catalyses a quinone + NADH + 5 H(+)(in) = a quinol + NAD(+) + 4 H(+)(out). Functionally, NDH-1 shuttles electrons from NADH, via FMN and iron-sulfur (Fe-S) centers, to quinones in the respiratory chain. The immediate electron acceptor for the enzyme in this species is believed to be ubiquinone. Couples the redox reaction to proton translocation (for every two electrons transferred, four hydrogen ions are translocated across the cytoplasmic membrane), and thus conserves the redox energy in a proton gradient. This is NADH-quinone oxidoreductase subunit A from Verminephrobacter eiseniae (strain EF01-2).